The chain runs to 211 residues: Orotate phosphoribosyltransferase (211 aa).

5-phospho-alpha-D-ribose 1-diphosphate is bound at residue K26. 34-35 (FF) contributes to the orotate binding site. Residues 72–73 (YK), R98, K99, K102, H104, and 123–131 (DDVITAGTA) contribute to the 5-phospho-alpha-D-ribose 1-diphosphate site. Orotate contacts are provided by T127 and R155.

It belongs to the purine/pyrimidine phosphoribosyltransferase family. PyrE subfamily. As to quaternary structure, homodimer. Mg(2+) is required as a cofactor.

The catalysed reaction is orotidine 5'-phosphate + diphosphate = orotate + 5-phospho-alpha-D-ribose 1-diphosphate. It functions in the pathway pyrimidine metabolism; UMP biosynthesis via de novo pathway; UMP from orotate: step 1/2. Catalyzes the transfer of a ribosyl phosphate group from 5-phosphoribose 1-diphosphate to orotate, leading to the formation of orotidine monophosphate (OMP). The protein is Orotate phosphoribosyltransferase of Legionella pneumophila (strain Lens).